The sequence spans 824 residues: Translation initiation factor IF-2 (824 aa).

Disordered regions lie at residues 1-32 (MSDTDGKKTLGLRGGAPRPGNVKQSFSHGRTK) and 45-232 (VPKA…MGGQ). The span at 45 to 57 (VPKAGATTSAGGK) shows a compositional bias: low complexity. Over residues 86–144 (KAREAEEEAARIAEEKARAEERERRRAEQEERERAEREREESLKAKAEEDKRRKDEAEA) the composition is skewed to basic and acidic residues. A compositionally biased stretch (low complexity) spans 145-167 (AAKAAAAPAAEPVVQRPAAKAAP). The span at 170-193 (APRKQQDRDRDNKRGGKGNDDSRR) shows a compositional bias: basic and acidic residues. Positions 321–489 (TRPPVVTIMG…AIALQAEILE (169 aa)) constitute a tr-type G domain. Positions 330–337 (GHVDHGKT) are G1. 330–337 (GHVDHGKT) contacts GTP. Residues 355-359 (GITQH) form a G2 region. Residues 377–380 (DTPG) are G3. Residues 377–381 (DTPGH) and 431–434 (NKID) contribute to the GTP site. Residues 431–434 (NKID) form a G4 region. Positions 467-469 (SAI) are G5.

It belongs to the TRAFAC class translation factor GTPase superfamily. Classic translation factor GTPase family. IF-2 subfamily.

The protein localises to the cytoplasm. Functionally, one of the essential components for the initiation of protein synthesis. Protects formylmethionyl-tRNA from spontaneous hydrolysis and promotes its binding to the 30S ribosomal subunits. Also involved in the hydrolysis of GTP during the formation of the 70S ribosomal complex. This Roseobacter denitrificans (strain ATCC 33942 / OCh 114) (Erythrobacter sp. (strain OCh 114)) protein is Translation initiation factor IF-2.